Consider the following 419-residue polypeptide: [Butirosin acyl-carrier protein]--L-glutamate ligase (419 aa).

The region spanning 144 to 345 (RRLMERNGFN…FVESRVLVFN (202 aa)) is the ATP-grasp domain. 174–231 (ISAGFSKCVLKVPYGSSGKGLKVIDNERNFRFLLNYIQNRQTNVDLLLEGWHPHRLSL) is an ATP binding site. Positions 298, 312, and 314 each coordinate Mg(2+). Mn(2+) contacts are provided by Asp298, Glu312, and Asn314.

Monomer. Mg(2+) is required as a cofactor. Requires Mn(2+) as cofactor.

It carries out the reaction holo-[BtrI ACP] + L-glutamate + ATP = gamma-L-glutamyl-[BtrI ACP] + ADP + phosphate. It catalyses the reaction 4-aminobutanoyl-[BtrI ACP] + L-glutamate + ATP = 4-(gamma-L-glutamylamino)butanoyl-[BtrI ACP] + ADP + phosphate + H(+). The protein operates within antibiotic biosynthesis; butirosin biosynthesis. Functionally, ATP-dependent ligase that catalyzes 2 steps in the biosynthesis of the side chain of the aminoglycoside antibiotics in the biosynthetic pathway of butirosin. Mediates the addition of one molecule of L-glutamate to a dedicated acyl-carrier protein. Following decarboxylation of the product by BtrK, adds a second L-glutamate molecule. The chain is [Butirosin acyl-carrier protein]--L-glutamate ligase (btrJ) from Niallia circulans (Bacillus circulans).